A 1178-amino-acid polypeptide reads, in one-letter code: DNA-directed RNA polymerase I subunit 2 (1178 aa).

Residues 1097 to 1137 (CSLCGSLLTSSVVNVQQKKLIQEIGKLPPGRTPKKVTCYSC) form a C4-type zinc finger.

The protein belongs to the RNA polymerase beta chain family. Component of the RNA polymerase I (Pol I) complex consisting of at least 13 subunits.

It localises to the nucleus. The enzyme catalyses RNA(n) + a ribonucleoside 5'-triphosphate = RNA(n+1) + diphosphate. DNA-dependent RNA polymerase catalyzes the transcription of DNA into RNA using the four ribonucleoside triphosphates as substrates. Second largest core component of RNA polymerase I which synthesizes ribosomal RNA precursors. Proposed to contribute to the polymerase catalytic activity and forms the polymerase active center together with the largest subunit. Pol I is composed of mobile elements and NRPA2 is part of the core element with the central large cleft and probably a clamp element that moves to open and close the cleft. Functionally, essential for the completion of the three rounds of mitosis in female megaspores required for the development of mature gametophytes. The sequence is that of DNA-directed RNA polymerase I subunit 2 from Arabidopsis thaliana (Mouse-ear cress).